A 297-amino-acid polypeptide reads, in one-letter code: Protoheme IX farnesyltransferase (297 aa).

The next 9 membrane-spanning stretches (helical) occupy residues 23–43 (VTQLAVFCAVIGMFLAAPGMP), 49–69 (VFGTLGIWLLAAAAFAINCLI), 93–113 (IQVLSLSGLLGGAGMLVLYHL), 117–137 (LTMWLTFATFVGYAIIYTVIL), 144–164 (NIVIGGLSGAMPPALGWAAVA), 171–191 (AWVLVLIIFIWTPPHFWALAL), 215–235 (RLHILLYSFALLATTLLPYAI), 238–258 (SGALYLASALALGGMFVWYAW), and 275–295 (FSILYLALLFGALLIDHWVGL).

The protein belongs to the UbiA prenyltransferase family. Protoheme IX farnesyltransferase subfamily.

It localises to the cell inner membrane. It carries out the reaction heme b + (2E,6E)-farnesyl diphosphate + H2O = Fe(II)-heme o + diphosphate. The protein operates within porphyrin-containing compound metabolism; heme O biosynthesis; heme O from protoheme: step 1/1. Converts heme B (protoheme IX) to heme O by substitution of the vinyl group on carbon 2 of heme B porphyrin ring with a hydroxyethyl farnesyl side group. This Bordetella bronchiseptica (strain ATCC BAA-588 / NCTC 13252 / RB50) (Alcaligenes bronchisepticus) protein is Protoheme IX farnesyltransferase.